We begin with the raw amino-acid sequence, 458 residues long: Cysteine protease ATG4C (458 aa).

Met1 carries the post-translational modification N-acetylmethionine. Cys111 serves as the catalytic Nucleophile. Residues Asp345 and His347 contribute to the active site. Ser451 is subject to Phosphoserine. Residue Thr452 is modified to Phosphothreonine.

This sequence belongs to the peptidase C54 family.

Its subcellular location is the cytoplasm. The enzyme catalyses [protein]-C-terminal L-amino acid-glycyl-phosphatidylethanolamide + H2O = [protein]-C-terminal L-amino acid-glycine + a 1,2-diacyl-sn-glycero-3-phosphoethanolamine. Its activity is regulated as follows. Inhibited by N-ethylmaleimide. In terms of biological role, cysteine protease that plays a key role in autophagy by mediating both proteolytic activation and delipidation of ATG8 family proteins. The protease activity is required for proteolytic activation of ATG8 family proteins: cleaves the C-terminal amino acid of ATG8 proteins MAP1LC3 and GABARAPL2, to reveal a C-terminal glycine. Exposure of the glycine at the C-terminus is essential for ATG8 proteins conjugation to phosphatidylethanolamine (PE) and insertion to membranes, which is necessary for autophagy. In addition to the protease activity, also mediates delipidation of ATG8 family proteins. Catalyzes delipidation of PE-conjugated forms of ATG8 proteins during macroautophagy. Compared to ATG4B, the major protein for proteolytic activation of ATG8 proteins, shows weaker ability to cleave the C-terminal amino acid of ATG8 proteins, while it displays stronger delipidation activity. In contrast to other members of the family, weakly or not involved in phagophore growth during mitophagy. The polypeptide is Cysteine protease ATG4C (Homo sapiens (Human)).